The chain runs to 173 residues: Large ribosomal subunit protein uL10 (173 aa).

This sequence belongs to the universal ribosomal protein uL10 family. Part of the ribosomal stalk of the 50S ribosomal subunit. The N-terminus interacts with L11 and the large rRNA to form the base of the stalk. The C-terminus forms an elongated spine to which L12 dimers bind in a sequential fashion forming a multimeric L10(L12)X complex.

Functionally, forms part of the ribosomal stalk, playing a central role in the interaction of the ribosome with GTP-bound translation factors. The chain is Large ribosomal subunit protein uL10 from Myxococcus xanthus (strain DK1622).